The chain runs to 119 residues: Fluoride-specific ion channel FluC 1 (119 aa).

4 consecutive transmembrane segments (helical) span residues 6–26, 31–51, 66–86, and 91–111; these read VALVAGGGFAGALCRHGIAVV, FPWGTLVVNVAGAFLLGAIVY, VVATGFLSSFTTYSTFAGETI, and RLAALNVVGNYALGFVAVLVA.

It belongs to the fluoride channel Fluc/FEX (TC 1.A.43) family.

It is found in the cell membrane. The enzyme catalyses fluoride(in) = fluoride(out). Functionally, fluoride-specific ion channel. Important for reducing fluoride concentration in the cell, thus reducing its toxicity. In Natronomonas pharaonis (strain ATCC 35678 / DSM 2160 / CIP 103997 / JCM 8858 / NBRC 14720 / NCIMB 2260 / Gabara) (Halobacterium pharaonis), this protein is Fluoride-specific ion channel FluC 1.